The primary structure comprises 303 residues: Glycine--tRNA ligase alpha subunit (303 aa).

This sequence belongs to the class-II aminoacyl-tRNA synthetase family. Tetramer of two alpha and two beta subunits.

The protein resides in the cytoplasm. The enzyme catalyses tRNA(Gly) + glycine + ATP = glycyl-tRNA(Gly) + AMP + diphosphate. The sequence is that of Glycine--tRNA ligase alpha subunit from Salmonella paratyphi A (strain ATCC 9150 / SARB42).